The chain runs to 676 residues: DNA ligase (676 aa).

NAD(+)-binding positions include Asp-35–Asp-39, Ser-84–Leu-85, and Glu-118. The N6-AMP-lysine intermediate role is filled by Lys-120. Positions 141, 184, 299, and 323 each coordinate NAD(+). Zn(2+) contacts are provided by Cys-417, Cys-420, Cys-435, and Cys-441. A BRCT domain is found at Leu-600 to Leu-676.

The protein belongs to the NAD-dependent DNA ligase family. LigA subfamily. It depends on Mg(2+) as a cofactor. Mn(2+) is required as a cofactor.

The catalysed reaction is NAD(+) + (deoxyribonucleotide)n-3'-hydroxyl + 5'-phospho-(deoxyribonucleotide)m = (deoxyribonucleotide)n+m + AMP + beta-nicotinamide D-nucleotide.. DNA ligase that catalyzes the formation of phosphodiester linkages between 5'-phosphoryl and 3'-hydroxyl groups in double-stranded DNA using NAD as a coenzyme and as the energy source for the reaction. It is essential for DNA replication and repair of damaged DNA. The chain is DNA ligase from Chlorobium phaeobacteroides (strain DSM 266 / SMG 266 / 2430).